A 158-amino-acid polypeptide reads, in one-letter code: Succinate dehydrogenase [ubiquinone] cytochrome b small subunit B, mitochondrial (158 aa).

A mitochondrion-targeting transit peptide spans 1 to 29 (MAALVRISSLCHRGVSPLLFRPSSLIRPL). Residues 30-62 (AVQQKDHDCSYLISARIHATPSNYAGSGSKAAT) lie on the Mitochondrial matrix side of the membrane. Residues 63–84 (MHWTGERILSIALLSLAPVAYF) traverse the membrane as a helical segment. The Mitochondrial intermembrane portion of the chain corresponds to 85-89 (CPSPA). A helical transmembrane segment spans residues 90–110 (VDYSLAAALTLHGHWGLGQVV). Heme b is bound at residue His-101. The Mitochondrial matrix segment spans residues 111 to 119 (TDYVHGDAK). Residue Tyr-113 coordinates a ubiquinone. Residues 120 to 141 (IKMANAGLFVLSTVTFAGLCYF) traverse the membrane as a helical segment. The Mitochondrial intermembrane segment spans residues 142–158 (NYHDVGICKAVALLWSK).

This sequence belongs to the CybS family. Component of complex II composed of four subunits: the flavoprotein (FP) SDHA, iron-sulfur protein (IP) SDHB, and a cytochrome b560 composed of SDHC and SDHD.

It localises to the mitochondrion inner membrane. Its pathway is carbohydrate metabolism; tricarboxylic acid cycle. Membrane-anchoring subunit of succinate dehydrogenase (SDH) that is involved in complex II of the mitochondrial electron transport chain and is responsible for transferring electrons from succinate to ubiquinone (coenzyme Q). SDH also oxidizes malate to the non-canonical enol form of oxaloacetate, enol-oxaloacetate. Enol-oxaloacetate, which is a potent inhibitor of the succinate dehydrogenase activity, is further isomerized into keto-oxaloacetate. The polypeptide is Succinate dehydrogenase [ubiquinone] cytochrome b small subunit B, mitochondrial (sdhdb) (Danio rerio (Zebrafish)).